We begin with the raw amino-acid sequence, 386 residues long: N-terminal EF-hand calcium-binding protein 2 (386 aa).

At R10 the chain carries Omega-N-methylarginine. R42 is subject to Asymmetric dimethylarginine. 2 consecutive EF-hand domains span residues 60-95 (GGTA…GVLN) and 96-129 (EKEL…HMGD). Residues D73, N75, D77, K79, E84, D107, D109, T111, H113, and E118 each coordinate Ca(2+). The stretch at 170–201 (LKETANQIQSLLSSVESAVEAIEEQTSQLRQN) forms a coiled coil. The ABM domain maps to 286-375 (QLVRQEMAVC…SQPEALSRIL (90 aa)).

As to quaternary structure, interacts (calcium-dependent) with ADORA2A and GRM5. In terms of tissue distribution, expressed in brain. Expressed in the spinal dorsal horn with especially strong expression in lamina IIi; found in excitory synaptic boutons and in ependymal cells (at protein level).

The protein localises to the cytoplasm. It localises to the cell projection. The protein resides in the dendrite. It is found in the axon. Its subcellular location is the cell membrane. In terms of biological role, may act as a signaling scaffold protein that senses intracellular calcium. Can modulate ligand-induced internalization of ADORA2A and coupling efficiency of mGluR5/GRM5; for both receptors may regulate signaling activity such as promoting MAPK1/3 (ERK1/2) activation. In Homo sapiens (Human), this protein is N-terminal EF-hand calcium-binding protein 2 (NECAB2).